The following is a 158-amino-acid chain: UPF0329 protein ECU06_0050 (158 aa).

It belongs to the UPF0329 family.

The protein is UPF0329 protein ECU06_0050 of Encephalitozoon cuniculi (strain GB-M1) (Microsporidian parasite).